We begin with the raw amino-acid sequence, 479 residues long: Flavonol 3-O-glucosyltransferase UGT71C4 (479 aa).

The Proton acceptor role is filled by His17. An an anthocyanidin-binding site is contributed by His17. Asp127 functions as the Charge relay in the catalytic mechanism. Residues Thr150, Ala350, Gln352, His367, Trp370, Asn371, Ser372, and Glu375 each contribute to the UDP-alpha-D-glucose site. Ala390 contacts an anthocyanidin. The UDP-alpha-D-glucose site is built by Glu391 and Gln392.

It belongs to the UDP-glycosyltransferase family.

The enzyme catalyses a flavonol + UDP-alpha-D-glucose = a flavonol 3-O-beta-D-glucoside + UDP + H(+). It carries out the reaction a 7-O-hydroxy-flavonol + UDP-alpha-D-glucose = a flavonol 7-O-beta-D-glucoside + UDP + H(+). Functionally, possesses quercetin 3-O-glucosyltransferase and 7-O-glucosyltransferase activities in vitro. Also active in vitro on benzoates and benzoate derivatives. The chain is Flavonol 3-O-glucosyltransferase UGT71C4 from Arabidopsis thaliana (Mouse-ear cress).